We begin with the raw amino-acid sequence, 626 residues long: Colicin-Ia (626 aa).

The segment at 23–225 (EIMAVDIYVN…TRLSELEKNG (203 aa)) is translocation (T). Residues 276 to 286 (QQLTQQKNTPD) are compositionally biased toward polar residues. The segment at 276–308 (QQLTQQKNTPDGKTIVSPEKFPGRSSTNHSIVV) is disordered. A receptor-binding (R) region spans residues 282 to 385 (KNTPDGKTIV…LRQRLLDARN (104 aa)). Residues 450 to 626 (KDAINFTTEF…VEKANKFWGI (177 aa)) are channel (C). 2 helical membrane passes run 580–594 (ATAL…LTGS) and 597–612 (GIIG…GALI).

It belongs to the channel forming colicin family.

The protein resides in the cell membrane. In terms of biological role, this colicin is a channel-forming colicin. This class of transmembrane toxins depolarize the cytoplasmic membrane, leading to dissipation of cellular energy. Functionally, colicins are polypeptide toxins produced by and active against E.coli and closely related bacteria. The chain is Colicin-Ia (cia) from Escherichia coli.